The primary structure comprises 253 residues: Sugar fermentation stimulation protein homolog (253 aa).

This sequence belongs to the SfsA family.

This chain is Sugar fermentation stimulation protein homolog, found in Chromohalobacter salexigens (strain ATCC BAA-138 / DSM 3043 / CIP 106854 / NCIMB 13768 / 1H11).